The sequence spans 185 residues: Transcriptional repressor NrdR (185 aa).

A disordered region spans residues 1 to 24 (MRCPFCGGPDTQVKDSRPSEDSSA). Residues 3–34 (CPFCGGPDTQVKDSRPSEDSSAIRRRRVCPDC) fold into a zinc finger. A compositionally biased stretch (basic and acidic residues) spans 12-24 (QVKDSRPSEDSSA). The region spanning 49-139 (LVVLKRSGKR…VYKNFREAQD (91 aa)) is the ATP-cone domain. The disordered stretch occupies residues 149 to 185 (ERLEGEGDLPEDGEAAPAPPDEVVAAPRRGRPARKRA). The segment covering 176-185 (RRGRPARKRA) has biased composition (basic residues).

Belongs to the NrdR family. Requires Zn(2+) as cofactor.

In terms of biological role, negatively regulates transcription of bacterial ribonucleotide reductase nrd genes and operons by binding to NrdR-boxes. In Methylorubrum extorquens (strain PA1) (Methylobacterium extorquens), this protein is Transcriptional repressor NrdR.